Here is a 433-residue protein sequence, read N- to C-terminus: Transcobalamin-1 (433 aa).

An N-terminal signal peptide occupies residues 1 to 23; sequence MRQSHQLPLVGLLLFSFIPSQLC. Residues 24–310 form a globular N-terminal alpha domain region; that stretch reads EICEVSEENY…DINKDSSCVS (287 aa). Cystine bridges form between cysteine 26–cysteine 265, cysteine 105–cysteine 308, and cysteine 155–cysteine 197. 142 to 146 is a binding site for cyanocob(III)alamin; that stretch reads TNYYQ. A glycan (N-linked (GlcNAc...) asparagine) is linked at asparagine 160. Aspartate 186 lines the cyanocob(III)alamin pocket. Asparagine 216 carries an N-linked (GlcNAc...) asparagine glycan. Asparagine 240 and glutamine 289 together coordinate cyanocob(III)alamin. A flexible linker region spans residues 311–332; sequence ASGNFNISADEPITVTPPDSQS. 6 N-linked (GlcNAc...) asparagine glycosylation sites follow: asparagine 316, asparagine 337, asparagine 343, asparagine 349, asparagine 354, and asparagine 369. Positions 333 to 433 are globular C-terminal beta domain; sequence YISVNYSVRI…ENLEVRWSKY (101 aa). 385–386 serves as a coordination point for cyanocob(III)alamin; it reads YI. The cysteines at positions 388 and 393 are disulfide-linked. Residues 402–404, leucine 411, and tyrosine 433 contribute to the cyanocob(III)alamin site; that span reads WEL.

This sequence belongs to the eukaryotic cobalamin transport proteins family. In terms of processing, contains about 30% carbohydrates. As to expression, produced by the salivary glands of the oral cavity, in response to ingestion of food. Major constituent of secondary granules in neutrophils.

It is found in the secreted. In terms of biological role, binds vitamin B12 with femtomolar affinity and protects it from the acidic environment of the stomach. The polypeptide is Transcobalamin-1 (TCN1) (Homo sapiens (Human)).